A 650-amino-acid polypeptide reads, in one-letter code: Chaperone protein DnaK (650 aa).

Threonine 200 carries the phosphothreonine; by autocatalysis modification. The span at 611 to 636 (AQQAGAAGAAGAAEGAAHAGGAQQAA) shows a compositional bias: low complexity. Residues 611–637 (AQQAGAAGAAGAAEGAAHAGGAQQAAD) are disordered.

It belongs to the heat shock protein 70 family.

Functionally, acts as a chaperone. The chain is Chaperone protein DnaK from Burkholderia ambifaria (strain MC40-6).